Reading from the N-terminus, the 330-residue chain is Transcription factor TGA5 (330 aa).

Residues 1 to 13 (MGDTSPRTSVSTD) show a composition bias toward polar residues. Residues 1–64 (MGDTSPRTSV…REAARKSRLR (64 aa)) form a disordered region. Positions 35-47 (SSDRSKSKMDQKT) are enriched in basic and acidic residues. The region spanning 44 to 107 (DQKTLRRLAQ…SSGDQAHSTA (64 aa)) is the bZIP domain. Coiled coils occupy residues 45-98 (QKTL…FISS) and 211-244 (EQQSLDINNLQQSSQQAEDALSQGMDNLQQSLAD). The interval 46–66 (KTLRRLAQNREAARKSRLRKK) is basic motif. Residues 72–86 (LENSRLKLTQLEQEL) are leucine-zipper. The DOG1 domain maps to 111-327 (AMAFDVEYRR…RALSSLWLAR (217 aa)).

The protein belongs to the bZIP family. Binds DNA as a dimer. Interaction with the Dof domain protein OBP1 enhances the binding to the ocs element. Interacts with NPR1, NPR3 and NPR4. In terms of tissue distribution, predominantly expressed in roots.

It is found in the nucleus. Its function is as follows. Transcriptional activator that binds specifically to the DNA sequence 5'-TGACG-3'. Recognizes ocs elements like the as-1 motif of the cauliflower mosaic virus 35S promoter. Binding to the as-1-like cis elements mediate auxin- and salicylic acid-inducible transcription. May be involved in the induction of the systemic acquired resistance (SAR) via its interaction with NPR1. Could also bind to the Hex-motif (5'-TGACGTGG-3') another cis-acting element found in plant histone promoters. This Arabidopsis thaliana (Mouse-ear cress) protein is Transcription factor TGA5 (TGA5).